Reading from the N-terminus, the 838-residue chain is E3 ubiquitin-protein ligase RNF19A (838 aa).

Residues 41-61 (DRDLQSSASSVSLPSVKKAPK) are disordered. A compositionally biased stretch (low complexity) spans 46 to 57 (SSASSVSLPSVK). The tract at residues 128–351 (DFIECPLCLL…LSPSGCTFWG (224 aa)) is TRIAD supradomain. Cys132, Cys135, Cys150, His152, Cys155, Cys158, Cys176, Cys179, Cys219, Cys224, Cys241, Cys246, Cys251, Cys254, His259, Cys264, Cys301, and Cys304 together coordinate Zn(2+). The segment at 132 to 179 (CPLCLLRHSKDRFPDIMTCHHRSCVDCLRQYLRIEISESRVNISCPEC) adopts an RING-type 1 zinc-finger fold. The IBR-type zinc finger occupies 199 to 264 (EKYEEFMLRR…KQIWHPNQTC (66 aa)). The RING-type 2; atypical zinc-finger motif lies at 301–332 (CPRCAAYIIKMNDGSCNHMTCAVCGCEFCWLC). Residue Cys316 is part of the active site. Zn(2+) is bound by residues Cys321, Cys324, Cys329, Cys332, His340, and Cys347. The next 2 helical transmembrane spans lie at 368 to 388 (LVGAPVGIALIAGIAIPAMII) and 424 to 444 (VIVSPVVAAVTVGIGVPIMLA). Disordered regions lie at residues 622 to 685 (SKPS…GNMK) and 700 to 721 (QQSTNSSEFEAPSLSDSMPSVA). Over residues 630 to 662 (NSGSSSVDDGSATRSHAGGSSSGLPEGKSSATK) the composition is skewed to polar residues. Ser631 carries the phosphoserine modification. An interaction with CASR region spans residues 660 to 838 (ATKWSKEATA…ELKVAIQTEI (179 aa)). The segment covering 671-683 (KKSKSGKLRKKGN) has biased composition (basic residues). Polar residues predominate over residues 700-717 (QQSTNSSEFEAPSLSDSM).

It belongs to the RBR family. RNF19 subfamily. Interacts with UBE2L3 and UBE2L6. Interacts with transcription factor Sp1. Interacts with VCP, CASR, SNCAIP and with some SOD1 variants which cause amyotrophic lateral sclerosis, but not with wild-type SOD1. As to expression, widely expressed, with highest levels in heart. Ubiquitously expressed in the central nervous system.

It localises to the membrane. The protein resides in the cytoplasm. The protein localises to the cytoskeleton. Its subcellular location is the microtubule organizing center. It is found in the centrosome. It carries out the reaction [E2 ubiquitin-conjugating enzyme]-S-ubiquitinyl-L-cysteine + [acceptor protein]-L-lysine = [E2 ubiquitin-conjugating enzyme]-L-cysteine + [acceptor protein]-N(6)-ubiquitinyl-L-lysine.. It participates in protein modification; protein ubiquitination. Functionally, E3 ubiquitin-protein ligase which accepts ubiquitin from E2 ubiquitin-conjugating enzymes UBE2L3 and UBE2L6 in the form of a thioester and then directly transfers the ubiquitin to targeted substrates, such as SNCAIP or CASR. Specifically ubiquitinates pathogenic SOD1 variants, which leads to their proteasomal degradation and to neuronal protection. This chain is E3 ubiquitin-protein ligase RNF19A (RNF19A), found in Homo sapiens (Human).